We begin with the raw amino-acid sequence, 361 residues long: uncharacterized protein (361 aa).

This is an uncharacterized protein from Acanthamoeba polyphaga (Amoeba).